The primary structure comprises 557 residues: Glypican-4 (557 aa).

The first 18 residues, 1–18, serve as a signal peptide directing secretion; it reads MARLGLLALLCTLAALSA. Ser-357 carries the post-translational modification Phosphoserine. O-linked (Xyl...) (glycosaminoglycan) serine glycans are attached at residues Ser-494, Ser-498, and Ser-500. Residue Asn-514 is glycosylated (N-linked (GlcNAc...) asparagine). Ser-529 is lipidated: GPI-anchor amidated serine. Residues 530–557 constitute a propeptide, removed in mature form; the sequence is AGGAHAEAKPYLLAALCILFLAVQGEWR.

It belongs to the glypican family. Highly expressed in developing brain and kidney.

The protein localises to the cell membrane. It localises to the secreted. It is found in the extracellular space. Functionally, cell surface proteoglycan that bears heparan sulfate. May be involved in the development of kidney tubules and of the central nervous system. The protein is Glypican-4 (Gpc4) of Mus musculus (Mouse).